A 195-amino-acid polypeptide reads, in one-letter code: Imidazoleglycerol-phosphate dehydratase (195 aa).

This sequence belongs to the imidazoleglycerol-phosphate dehydratase family.

Its subcellular location is the cytoplasm. It catalyses the reaction D-erythro-1-(imidazol-4-yl)glycerol 3-phosphate = 3-(imidazol-4-yl)-2-oxopropyl phosphate + H2O. Its pathway is amino-acid biosynthesis; L-histidine biosynthesis; L-histidine from 5-phospho-alpha-D-ribose 1-diphosphate: step 6/9. This is Imidazoleglycerol-phosphate dehydratase from Burkholderia vietnamiensis (strain G4 / LMG 22486) (Burkholderia cepacia (strain R1808)).